Reading from the N-terminus, the 471-residue chain is 3-isopropylmalate dehydratase large subunit (471 aa).

Positions 347, 407, and 410 each coordinate [4Fe-4S] cluster.

Belongs to the aconitase/IPM isomerase family. LeuC type 1 subfamily. As to quaternary structure, heterodimer of LeuC and LeuD. The cofactor is [4Fe-4S] cluster.

The enzyme catalyses (2R,3S)-3-isopropylmalate = (2S)-2-isopropylmalate. The protein operates within amino-acid biosynthesis; L-leucine biosynthesis; L-leucine from 3-methyl-2-oxobutanoate: step 2/4. In terms of biological role, catalyzes the isomerization between 2-isopropylmalate and 3-isopropylmalate, via the formation of 2-isopropylmaleate. The sequence is that of 3-isopropylmalate dehydratase large subunit from Buchnera aphidicola subsp. Baizongia pistaciae (strain Bp).